A 467-amino-acid chain; its full sequence is 3-isopropylmalate dehydratase large subunit (467 aa).

[4Fe-4S] cluster contacts are provided by C348, C409, and C412.

It belongs to the aconitase/IPM isomerase family. LeuC type 1 subfamily. Heterodimer of LeuC and LeuD. [4Fe-4S] cluster serves as cofactor.

The catalysed reaction is (2R,3S)-3-isopropylmalate = (2S)-2-isopropylmalate. It participates in amino-acid biosynthesis; L-leucine biosynthesis; L-leucine from 3-methyl-2-oxobutanoate: step 2/4. Catalyzes the isomerization between 2-isopropylmalate and 3-isopropylmalate, via the formation of 2-isopropylmaleate. This is 3-isopropylmalate dehydratase large subunit from Thiobacillus denitrificans (strain ATCC 25259 / T1).